A 129-amino-acid chain; its full sequence is Large ribosomal subunit protein bL17 (129 aa).

This sequence belongs to the bacterial ribosomal protein bL17 family. In terms of assembly, part of the 50S ribosomal subunit. Contacts protein L32.

In Serratia proteamaculans (strain 568), this protein is Large ribosomal subunit protein bL17.